A 298-amino-acid chain; its full sequence is Transcription factor RAX2 (298 aa).

HTH myb-type domains lie at 9–62 (KANV…LNYL) and 63–117 (RPNI…KKKL). 2 DNA-binding regions (H-T-H motif) span residues 38–62 (WIAL…LNYL) and 90–113 (WSVI…NTKL).

Ubiquitous, with higher levels in roots, flowers, and shoot tips. Found in all cells of the shoot tips.

It localises to the nucleus. Transcription activator. Positively regulates axillary meristems (AMs) formation and development, especially during inflorescence. The protein is Transcription factor RAX2 (RAX2) of Arabidopsis thaliana (Mouse-ear cress).